A 336-amino-acid polypeptide reads, in one-letter code: tRNA N6-adenosine threonylcarbamoyltransferase (336 aa).

Residues His114 and His118 each contribute to the Fe cation site. Substrate contacts are provided by residues 136 to 140, Asp169, Gly182, Asp186, and Asn275; that span reads LVSGG. Asp301 contacts Fe cation.

It belongs to the KAE1 / TsaD family. Fe(2+) is required as a cofactor.

It is found in the cytoplasm. It carries out the reaction L-threonylcarbamoyladenylate + adenosine(37) in tRNA = N(6)-L-threonylcarbamoyladenosine(37) in tRNA + AMP + H(+). Its function is as follows. Required for the formation of a threonylcarbamoyl group on adenosine at position 37 (t(6)A37) in tRNAs that read codons beginning with adenine. Is involved in the transfer of the threonylcarbamoyl moiety of threonylcarbamoyl-AMP (TC-AMP) to the N6 group of A37, together with TsaE and TsaB. TsaD likely plays a direct catalytic role in this reaction. The sequence is that of tRNA N6-adenosine threonylcarbamoyltransferase from Streptococcus sanguinis (strain SK36).